The following is an 80-amino-acid chain: Large ribosomal subunit protein uL24 (80 aa).

It belongs to the universal ribosomal protein uL24 family. Part of the 50S ribosomal subunit.

One of two assembly initiator proteins, it binds directly to the 5'-end of the 23S rRNA, where it nucleates assembly of the 50S subunit. Its function is as follows. One of the proteins that surrounds the polypeptide exit tunnel on the outside of the subunit. The polypeptide is Large ribosomal subunit protein uL24 (Chlorobaculum parvum (strain DSM 263 / NCIMB 8327) (Chlorobium vibrioforme subsp. thiosulfatophilum)).